A 156-amino-acid polypeptide reads, in one-letter code: Small ribosomal subunit protein uS7 (156 aa).

It belongs to the universal ribosomal protein uS7 family. In terms of assembly, part of the 30S ribosomal subunit. Contacts proteins S9 and S11.

One of the primary rRNA binding proteins, it binds directly to 16S rRNA where it nucleates assembly of the head domain of the 30S subunit. Is located at the subunit interface close to the decoding center, probably blocks exit of the E-site tRNA. This chain is Small ribosomal subunit protein uS7, found in Bacillus licheniformis (strain ATCC 14580 / DSM 13 / JCM 2505 / CCUG 7422 / NBRC 12200 / NCIMB 9375 / NCTC 10341 / NRRL NRS-1264 / Gibson 46).